Consider the following 294-residue polypeptide: UDP-3-O-acyl-N-acetylglucosamine deacetylase (294 aa).

Residues His75, His232, and Asp236 each contribute to the Zn(2+) site. His259 functions as the Proton donor in the catalytic mechanism.

The protein belongs to the LpxC family. Zn(2+) is required as a cofactor.

The enzyme catalyses a UDP-3-O-[(3R)-3-hydroxyacyl]-N-acetyl-alpha-D-glucosamine + H2O = a UDP-3-O-[(3R)-3-hydroxyacyl]-alpha-D-glucosamine + acetate. It functions in the pathway glycolipid biosynthesis; lipid IV(A) biosynthesis; lipid IV(A) from (3R)-3-hydroxytetradecanoyl-[acyl-carrier-protein] and UDP-N-acetyl-alpha-D-glucosamine: step 2/6. Its function is as follows. Catalyzes the hydrolysis of UDP-3-O-myristoyl-N-acetylglucosamine to form UDP-3-O-myristoylglucosamine and acetate, the committed step in lipid A biosynthesis. This is UDP-3-O-acyl-N-acetylglucosamine deacetylase from Campylobacter jejuni subsp. jejuni serotype O:23/36 (strain 81-176).